Consider the following 343-residue polypeptide: Heat-inducible transcription repressor HrcA (343 aa).

This sequence belongs to the HrcA family.

Negative regulator of class I heat shock genes (grpE-dnaK-dnaJ and groELS operons). Prevents heat-shock induction of these operons. The sequence is that of Heat-inducible transcription repressor HrcA from Phytoplasma mali (strain AT).